Consider the following 1657-residue polypeptide: Ras GTPase-activating-like protein IQGAP1 (1657 aa).

S2 carries the N-acetylserine modification. S2 carries the phosphoserine modification. One can recognise a Calponin-homology (CH) domain in the interval 44 to 159 (LCHLEEAKRW…YCIHALSLYL (116 aa)). Y172 is subject to Phosphotyrosine. Position 330 is a phosphoserine (S330). A WW domain is found at 685–710 (WVKHWVKGGYHYYHNLETQAGGWAEP). IQ domains lie at 745-774 (NEGL…FLKK), 775-804 (QIPA…YLHS), 805-834 (HKDE…YFRD), and 835-864 (HIND…AEDP). The tract at residues 956–1274 (GGLKALSKEK…FFQVACDVPE (319 aa)) is C1. The Ras-GAP domain occupies 1020–1269 (YLLLRLFQTA…QKFRRFFQVA (250 aa)). The C2 stretch occupies residues 1276–1657 (QDKFNVDEYS…FLLNKKFYGK (382 aa)). S1441 carries the post-translational modification Phosphoserine.

As to quaternary structure, interacts with CDC42; the interaction is demonstrated with IQGAP1 in GTP-bound and in nucleotide-free state. Interacts with RAC1. Does not interact with RHOA. Interacts with TSG101. Interacts with PAK6. Interacts with SASH1. Interacts with PJVK. Interacts with SLC26A4. This interaction enhances the chloride-bicarbonate exchange activity of SLC26A4. Interacts with SVEP1. Interacts with ILK; the interaction is required for localization of IQGAP to the cell cortex. In terms of assembly, (Microbial infection) In case of infection, interacts with S.typhimurium protein sseI. In terms of tissue distribution, expressed in the kidney (at protein level).

It is found in the cell membrane. The protein localises to the nucleus. It localises to the cytoplasm. The protein resides in the cell cortex. Its subcellular location is the apical cell membrane. It is found in the basolateral cell membrane. In terms of biological role, plays a crucial role in regulating the dynamics and assembly of the actin cytoskeleton. Recruited to the cell cortex by interaction with ILK which allows it to cooperate with its effector DIAPH1 to locally stabilize microtubules and allow stable insertion of caveolae into the plasma membrane. Binds to activated CDC42 but does not stimulate its GTPase activity. Associates with calmodulin. May promote neurite outgrowth. May play a possible role in cell cycle regulation by contributing to cell cycle progression after DNA replication arrest. This is Ras GTPase-activating-like protein IQGAP1 (Iqgap1) from Mus musculus (Mouse).